The following is a 501-amino-acid chain: Glycerol kinase (501 aa).

T17 provides a ligand contact to ADP. ATP contacts are provided by T17, T18, and S19. Residue T17 coordinates sn-glycerol 3-phosphate. R21 is a binding site for ADP. Positions 87, 88, 139, and 243 each coordinate sn-glycerol 3-phosphate. Positions 87, 88, 139, 243, and 244 each coordinate glycerol. Residues T265 and G308 each contribute to the ADP site. ATP is bound by residues T265, G308, Q312, and G409. ADP-binding residues include G409 and N413.

The protein belongs to the FGGY kinase family.

The enzyme catalyses glycerol + ATP = sn-glycerol 3-phosphate + ADP + H(+). The protein operates within polyol metabolism; glycerol degradation via glycerol kinase pathway; sn-glycerol 3-phosphate from glycerol: step 1/1. Inhibited by fructose 1,6-bisphosphate (FBP). In terms of biological role, key enzyme in the regulation of glycerol uptake and metabolism. Catalyzes the phosphorylation of glycerol to yield sn-glycerol 3-phosphate. The sequence is that of Glycerol kinase from Pseudomonas fluorescens (strain SBW25).